The sequence spans 321 residues: uncharacterized protein (321 aa).

The disordered stretch occupies residues 280 to 306; it reads NSDHINNENNTNSNNDDNSNNSNNNNE. Residues 286–306 are compositionally biased toward low complexity; the sequence is NENNTNSNNDDNSNNSNNNNE.

This is an uncharacterized protein from Dictyostelium discoideum (Social amoeba).